Here is a 327-residue protein sequence, read N- to C-terminus: Ribosomal RNA large subunit methyltransferase F (327 aa).

This sequence belongs to the methyltransferase superfamily. METTL16/RlmF family.

It localises to the cytoplasm. The enzyme catalyses adenosine(1618) in 23S rRNA + S-adenosyl-L-methionine = N(6)-methyladenosine(1618) in 23S rRNA + S-adenosyl-L-homocysteine + H(+). Specifically methylates the adenine in position 1618 of 23S rRNA. The protein is Ribosomal RNA large subunit methyltransferase F of Marinomonas sp. (strain MWYL1).